Reading from the N-terminus, the 204-residue chain is E3 ubiquitin-protein ligase MPSR1 (204 aa).

The RING-type; atypical zinc finger occupies 113-154 (CVICLEEWKSEETVKEMPCKHRFHGGCIEKWLGFHGSCPVCR).

In terms of processing, autoubiquitinated.

The protein localises to the cytoplasm. It catalyses the reaction S-ubiquitinyl-[E2 ubiquitin-conjugating enzyme]-L-cysteine + [acceptor protein]-L-lysine = [E2 ubiquitin-conjugating enzyme]-L-cysteine + N(6)-ubiquitinyl-[acceptor protein]-L-lysine.. In terms of biological role, E3 ubiquitin-protein ligase involved in protein quality control (PQC) under proteotoxic stress. Is essential to plant survival under proteotoxic stress. Functions by removing damaged proteins before they form cytotoxic aggregates. Recognizes misfolded proteins selectively and tethers polyubiquitin chains to the proteins directly for subsequent degradation by the 26S proteasome pathway. Targets misfolded proteins independently of cytoplasmic chaperones. Associates with the 26S proteasome and sustains the structural integrity of the proteasome complex at the initial stage of proteotoxic stress. Under normal conditions, MPSR1 becomes highly unstable by its autoubiquitination activity and is stabilized during proteotoxic stress by conjugating ubiquitins on misfolded proteins. This is E3 ubiquitin-protein ligase MPSR1 from Arabidopsis thaliana (Mouse-ear cress).